A 323-amino-acid chain; its full sequence is Aquaporin-4 (323 aa).

Over 1-36 (MSDGAAARRWGKCGPPCSRESIMVAFKGVWTQAFWK) the chain is Cytoplasmic. S-palmitoyl cysteine attachment occurs at residues Cys-13 and Cys-17. Residues 37–57 (AVTAEFLAMLIFVLLSVGSTI) form a helical membrane-spanning segment. The Extracellular segment spans residues 58–69 (NWGGSENPLPVD). Residues 70–89 (MVLISLCFGLSIATMVQCFG) form a helical membrane-spanning segment. Topologically, residues 90–93 (HISG) are cytoplasmic. An intramembrane region (discontinuously helical) is located at residues 94–101 (GHINPAVT). Positions 97–99 (NPA) match the NPA 1 motif. At 102-115 (VAMVCTRKISIAKS) the chain is on the cytoplasmic side. Ser-111 bears the Phosphoserine; by PKG mark. The helical transmembrane segment at 116 to 136 (VFYITAQCLGAIIGAGILYLV) threads the bilayer. Over 137–155 (TPPSVVGGLGVTTVHGNLT) the chain is Extracellular. Asn-153 is a glycosylation site (N-linked (GlcNAc...) asparagine). A helical transmembrane segment spans residues 156 to 176 (AGHGLLVELIITFQLVFTIFA). The Cytoplasmic portion of the chain corresponds to 177 to 184 (SCDSKRTD). The residue at position 180 (Ser-180) is a Phosphoserine; by PKC. A helical membrane pass occupies residues 185 to 205 (VTGSVALAIGFSVAIGHLFAI). At 206-208 (NYT) the chain is on the extracellular side. Residues 209-222 (GASMNPARSFGPAV) constitute an intramembrane region (discontinuously helical). Positions 213-215 (NPA) match the NPA 2 motif. Over 223-231 (IMGNWENHW) the chain is Extracellular. The helical transmembrane segment at 232 to 252 (IYWVGPIIGAVLAGALYEYVF) threads the bilayer. Over 253 to 323 (CPDVELKRRL…DSSGEVLSSV (71 aa)) the chain is Cytoplasmic. Phosphoserine occurs at positions 276 and 285. Position 289 is a phosphothreonine (Thr-289). Residue Ser-321 is modified to Phosphoserine.

This sequence belongs to the MIP/aquaporin (TC 1.A.8) family. Homotetramer. The tetramers can form oligomeric arrays in membranes. The size of the oligomers differs between tissues and is smaller in skeletal muscle than in brain. Interaction between AQP4 oligomeric arrays in close-by cells can contribute to cell-cell adhesion. Part of a complex containing MLC1, TRPV4, HEPACAM and ATP1B1. Phosphorylation by PKC at Ser-180 promotes internalization from the cell membrane, reducing the conductance by 50%. Phosphorylation by PKG at Ser-111 in response to glutamate increases conductance by 40%. Post-translationally, isoform Long: Palmitoylated on its N-terminal region. Isoform 3: Not palmitoylated. Detected in cerebellum. Detected on pericapillary astrocyte endfeet in cerebellum, and in skeletal muscle. Detected in glial lamellae in the hypothalamus (at protein level). Abundant in mature brain cortex, cerebellum and spinal cord. Highly expressed in the ependymal cell lining the aqueductal system and over the space of the brain in contact with the subarachnoid space. Detected in paraventricular and supraoptic nuclei, the granule cell layer of the dentate gyrus and the Purkinje cell layer in the cerebellum. Only weakly detectable in eye, kidney, intestine, and lung.

It is found in the cell membrane. It localises to the basolateral cell membrane. The protein resides in the endosome membrane. The protein localises to the sarcolemma. Its subcellular location is the cell projection. The enzyme catalyses H2O(in) = H2O(out). In terms of biological role, forms a water-specific channel. Plays an important role in brain water homeostasis and in glymphatic solute transport. Required for a normal rate of water exchange across the blood brain interface. Required for normal levels of cerebrospinal fluid influx into the brain cortex and parenchyma along paravascular spaces that surround penetrating arteries, and for normal drainage of interstitial fluid along paravenous drainage pathways. Thereby, it is required for normal clearance of solutes from the brain interstitial fluid, including soluble beta-amyloid peptides derived from APP. Plays a redundant role in urinary water homeostasis and urinary concentrating ability. In Rattus norvegicus (Rat), this protein is Aquaporin-4 (Aqp4).